The sequence spans 650 residues: Aminopeptidase B (650 aa).

298-302 (GGMEN) provides a ligand contact to substrate. Histidine 325 provides a ligand contact to Zn(2+). Glutamate 326 functions as the Proton acceptor in the catalytic mechanism. Residues histidine 329 and glutamate 348 each contribute to the Zn(2+) site. Lysine 446 is subject to N6-acetyllysine.

This sequence belongs to the peptidase M1 family. Monomer. Zn(2+) serves as cofactor.

The protein localises to the secreted. It catalyses the reaction Release of N-terminal Arg and Lys from oligopeptides when P1' is not Pro. Also acts on arylamides of Arg and Lys.. Functionally, exopeptidase which selectively removes arginine and/or lysine residues from the N-terminus of several peptide substrates including Arg(0)-Leu-enkephalin, Arg(0)-Met-enkephalin and Arg(-1)-Lys(0)-somatostatin-14. Can hydrolyze leukotriene A4 (LTA-4) into leukotriene B4 (LTB-4). The sequence is that of Aminopeptidase B (Rnpep) from Mus musculus (Mouse).